Here is a 383-residue protein sequence, read N- to C-terminus: S-adenosylmethionine synthase (383 aa).

Residue histidine 15 coordinates ATP. Aspartate 17 provides a ligand contact to Mg(2+). Glutamate 43 is a binding site for K(+). L-methionine-binding residues include glutamate 56 and glutamine 99. The tract at residues 99–109 (QSPDINQGVDR) is flexible loop. ATP contacts are provided by residues 164–166 (DAK), 230–231 (RF), aspartate 239, 245–246 (RK), alanine 262, and lysine 266. Aspartate 239 contributes to the L-methionine binding site. Lysine 270 contributes to the L-methionine binding site.

The protein belongs to the AdoMet synthase family. Homotetramer; dimer of dimers. Mg(2+) serves as cofactor. The cofactor is K(+).

It is found in the cytoplasm. It catalyses the reaction L-methionine + ATP + H2O = S-adenosyl-L-methionine + phosphate + diphosphate. The protein operates within amino-acid biosynthesis; S-adenosyl-L-methionine biosynthesis; S-adenosyl-L-methionine from L-methionine: step 1/1. Catalyzes the formation of S-adenosylmethionine (AdoMet) from methionine and ATP. The overall synthetic reaction is composed of two sequential steps, AdoMet formation and the subsequent tripolyphosphate hydrolysis which occurs prior to release of AdoMet from the enzyme. This Pseudoalteromonas translucida (strain TAC 125) protein is S-adenosylmethionine synthase.